A 459-amino-acid chain; its full sequence is MSNFAIILAAGKGTRMKSDLPKVLHKVAGISMLEHVFRSVGAIQPEKTVTVVGHKAELVEEVLTGQTEFVTQSEQLGTGHAVMMTEPILEGLSGHTLVIAGDTPLITGESLKNLIDFHINHKNVATILTAETDNPFGYGRIVRNDNAEVLRIVEQKDATDFEKQIKEINTGTYVFDNERLFEALKNINTNNAQGEYYITDVIGIFRETGEKVGAYTLKDFDESLGVNDRVALATAESVMRRRINHKHMVNGVSFVNPEATYIDIDVEIAPEVQIEANVTLKGQTKIGAETVLTNGTYVVDSTIGAGAVITNSMIEESSVADGVTVGPYAHIRPNSSLGAQVHIGNFVEVKGSSIGENTKAGHLTYIGNCEVGSNVNFGAGTITVNYDGKNKYKTVIGDNVFVGSNSTIIAPVELGDNSLVGAGSTITKDVPADAIAIGRGRQINKDEYATRLPHHPKNQ.

The pyrophosphorylase stretch occupies residues 1 to 229 (MSNFAIILAA…FDESLGVNDR (229 aa)). Residues 8–11 (LAAG), Lys22, Gln72, and 77–78 (GT) each bind UDP-N-acetyl-alpha-D-glucosamine. Asp102 provides a ligand contact to Mg(2+). UDP-N-acetyl-alpha-D-glucosamine-binding residues include Gly139, Glu154, Asn169, and Asn227. A Mg(2+)-binding site is contributed by Asn227. Positions 230 to 250 (VALATAESVMRRRINHKHMVN) are linker. Residues 251–459 (GVSFVNPEAT…TRLPHHPKNQ (209 aa)) form an N-acetyltransferase region. 2 residues coordinate UDP-N-acetyl-alpha-D-glucosamine: Arg332 and Lys350. His362 functions as the Proton acceptor in the catalytic mechanism. UDP-N-acetyl-alpha-D-glucosamine contacts are provided by Tyr365 and Asn376. Acetyl-CoA-binding positions include Ala379, 385 to 386 (NY), Ser404, Ala422, and Arg439.

In the N-terminal section; belongs to the N-acetylglucosamine-1-phosphate uridyltransferase family. It in the C-terminal section; belongs to the transferase hexapeptide repeat family. In terms of assembly, homotrimer. Requires Mg(2+) as cofactor.

It localises to the cytoplasm. The enzyme catalyses alpha-D-glucosamine 1-phosphate + acetyl-CoA = N-acetyl-alpha-D-glucosamine 1-phosphate + CoA + H(+). It catalyses the reaction N-acetyl-alpha-D-glucosamine 1-phosphate + UTP + H(+) = UDP-N-acetyl-alpha-D-glucosamine + diphosphate. It participates in nucleotide-sugar biosynthesis; UDP-N-acetyl-alpha-D-glucosamine biosynthesis; N-acetyl-alpha-D-glucosamine 1-phosphate from alpha-D-glucosamine 6-phosphate (route II): step 2/2. Its pathway is nucleotide-sugar biosynthesis; UDP-N-acetyl-alpha-D-glucosamine biosynthesis; UDP-N-acetyl-alpha-D-glucosamine from N-acetyl-alpha-D-glucosamine 1-phosphate: step 1/1. The protein operates within bacterial outer membrane biogenesis; LPS lipid A biosynthesis. In terms of biological role, catalyzes the last two sequential reactions in the de novo biosynthetic pathway for UDP-N-acetylglucosamine (UDP-GlcNAc). The C-terminal domain catalyzes the transfer of acetyl group from acetyl coenzyme A to glucosamine-1-phosphate (GlcN-1-P) to produce N-acetylglucosamine-1-phosphate (GlcNAc-1-P), which is converted into UDP-GlcNAc by the transfer of uridine 5-monophosphate (from uridine 5-triphosphate), a reaction catalyzed by the N-terminal domain. This Streptococcus pneumoniae (strain Taiwan19F-14) protein is Bifunctional protein GlmU.